The chain runs to 455 residues: Chromosomal replication initiator protein DnaA 2 (455 aa).

A domain I, interacts with DnaA modulators region spans residues 1 to 95 (MLTCNDCSTW…KRSSPLVTPS (95 aa)). The tract at residues 96-112 (IAKPATEVSEENKDFQL) is domain II. Residues 113-328 (KLNGAYRFDN…GAINKLTAYC (216 aa)) form a domain III, AAA+ region region. ATP is bound by residues Gly-157, Gly-159, Lys-160, and Thr-161. Positions 329 to 455 (LLFNKPLTET…IAIDSPQHFV (127 aa)) are domain IV, binds dsDNA.

This sequence belongs to the DnaA family. As to quaternary structure, oligomerizes as a right-handed, spiral filament on DNA at oriC.

It is found in the cytoplasm. In terms of biological role, plays an essential role in the initiation and regulation of chromosomal replication. ATP-DnaA binds to the origin of replication (oriC) to initiate formation of the DNA replication initiation complex once per cell cycle. Binds the DnaA box (a 9 base pair repeat at the origin) and separates the double-stranded (ds)DNA. Forms a right-handed helical filament on oriC DNA; dsDNA binds to the exterior of the filament while single-stranded (ss)DNA is stabiized in the filament's interior. The ATP-DnaA-oriC complex binds and stabilizes one strand of the AT-rich DNA unwinding element (DUE), permitting loading of DNA polymerase. After initiation quickly degrades to an ADP-DnaA complex that is not apt for DNA replication. Binds acidic phospholipids. The protein is Chromosomal replication initiator protein DnaA 2 of Chlamydia trachomatis serovar D (strain ATCC VR-885 / DSM 19411 / UW-3/Cx).